A 155-amino-acid chain; its full sequence is Regulatory protein RecX (155 aa).

This sequence belongs to the RecX family.

The protein resides in the cytoplasm. Functionally, modulates RecA activity. This chain is Regulatory protein RecX, found in Vibrio parahaemolyticus serotype O3:K6 (strain RIMD 2210633).